We begin with the raw amino-acid sequence, 184 residues long: Adenine phosphoribosyltransferase (184 aa).

It belongs to the purine/pyrimidine phosphoribosyltransferase family. Homodimer.

Its subcellular location is the cytoplasm. It catalyses the reaction AMP + diphosphate = 5-phospho-alpha-D-ribose 1-diphosphate + adenine. Its pathway is purine metabolism; AMP biosynthesis via salvage pathway; AMP from adenine: step 1/1. Catalyzes a salvage reaction resulting in the formation of AMP, that is energically less costly than de novo synthesis. This chain is Adenine phosphoribosyltransferase, found in Corynebacterium diphtheriae (strain ATCC 700971 / NCTC 13129 / Biotype gravis).